The primary structure comprises 85 residues: Translational regulator CsrA (85 aa).

The protein belongs to the CsrA/RsmA family. Homodimer; the beta-strands of each monomer intercalate to form a hydrophobic core, while the alpha-helices form wings that extend away from the core.

It is found in the cytoplasm. In terms of biological role, a translational regulator that binds mRNA to regulate translation initiation and/or mRNA stability. Usually binds in the 5'-UTR at or near the Shine-Dalgarno sequence preventing ribosome-binding, thus repressing translation. Its main target seems to be the major flagellin gene, while its function is anatagonized by FliW. The protein is Translational regulator CsrA of Leifsonia xyli subsp. xyli (strain CTCB07).